A 354-amino-acid chain; its full sequence is Adenine deaminase (354 aa).

Residues histidine 19, histidine 21, and histidine 211 each coordinate Zn(2+). Glutamate 214 functions as the Proton donor in the catalytic mechanism. Position 291 (aspartate 291) interacts with Zn(2+). Aspartate 292 serves as a coordination point for substrate.

The protein belongs to the metallo-dependent hydrolases superfamily. Adenosine and AMP deaminases family. Adenine deaminase type 2 subfamily. The cofactor is Zn(2+).

The protein localises to the cytoplasm. It localises to the nucleus. The enzyme catalyses adenine + H2O + H(+) = hypoxanthine + NH4(+). In terms of biological role, catalyzes the hydrolytic deamination of adenine to hypoxanthine. Plays an important role in the purine salvage pathway and in nitrogen catabolism. The polypeptide is Adenine deaminase (aah1) (Aspergillus fumigatus (strain ATCC MYA-4609 / CBS 101355 / FGSC A1100 / Af293) (Neosartorya fumigata)).